The primary structure comprises 255 residues: Imidazole glycerol phosphate synthase subunit HisF (255 aa).

Catalysis depends on residues Asp11 and Asp130.

This sequence belongs to the HisA/HisF family. As to quaternary structure, heterodimer of HisH and HisF.

Its subcellular location is the cytoplasm. It carries out the reaction 5-[(5-phospho-1-deoxy-D-ribulos-1-ylimino)methylamino]-1-(5-phospho-beta-D-ribosyl)imidazole-4-carboxamide + L-glutamine = D-erythro-1-(imidazol-4-yl)glycerol 3-phosphate + 5-amino-1-(5-phospho-beta-D-ribosyl)imidazole-4-carboxamide + L-glutamate + H(+). The protein operates within amino-acid biosynthesis; L-histidine biosynthesis; L-histidine from 5-phospho-alpha-D-ribose 1-diphosphate: step 5/9. IGPS catalyzes the conversion of PRFAR and glutamine to IGP, AICAR and glutamate. The HisF subunit catalyzes the cyclization activity that produces IGP and AICAR from PRFAR using the ammonia provided by the HisH subunit. This Exiguobacterium sp. (strain ATCC BAA-1283 / AT1b) protein is Imidazole glycerol phosphate synthase subunit HisF.